Consider the following 1790-residue polypeptide: Non-reducing polyketide synthase gsfA (1790 aa).

The interval 20 to 263 (GDQRTLFRKL…AMRKIQGMWH (244 aa)) is N-terminal acylcarrier protein transacylase domain (SAT). In terms of domain architecture, Ketosynthase family 3 (KS3) spans 392–822 (SSKIAVVGMS…GGNTAMIIEE (431 aa)). Active-site for beta-ketoacyl synthase activity residues include Cys563, His698, and His741. The segment at 922 to 1223 (FAFAGQGTFY…CSTLHRDSDN (302 aa)) is malonyl-CoA:ACP transacylase (MAT) domain. The segment at 1298–1615 (TSSIHRLYSE…PRIMLNRFFQ (318 aa)) is product template (PT) domain. The segment at 1302-1435 (HRLYSENYDS…AYYEDPSTWL (134 aa)) is N-terminal hotdog fold. The PKS/mFAS DH domain occupies 1302-1611 (HRLYSENYDS…FRQWPRIMLN (310 aa)). The active-site Proton acceptor; for dehydratase activity is the His1334. Positions 1460-1611 (MANKLTTSLA…FRQWPRIMLN (152 aa)) are C-terminal hotdog fold. The Proton donor; for dehydratase activity role is filled by Asp1518. Disordered regions lie at residues 1621–1648 (PPAPRVEKKRDAGRGTLPSSSSLQEKTT) and 1686–1718 (LDYSLLTPRTSPNSDERIEKTDSDSGFEEADGA). Over residues 1699-1708 (SDERIEKTDS) the composition is skewed to basic and acidic residues. One can recognise a Carrier domain in the interval 1716–1790 (DGANDVTSRA…TIGDLKKLLS (75 aa)). Position 1753 is an O-(pantetheine 4'-phosphoryl)serine (Ser1753).

The catalysed reaction is 6 malonyl-CoA + acetyl-CoA + 4 H(+) = 2-(2,4-dihydroxy-6-oxidobenzoyl)-5-hydroxy-3-methylbenzenolate + 6 CO2 + 7 CoA + H2O. It participates in secondary metabolite biosynthesis; terpenoid biosynthesis. In terms of biological role, norlichexanthone synthase; part of the gene cluster that mediates the biosynthesis of griseofulvin, an important antifungal drug that has been in use for a long time for treating dermatophyte infections. The first step of the pathway is the formation of the heptaketide backbone by gsfA which is initiated by priming with acetyl-CoA, followed by sequential condensations of 6 malonyl-CoA units. The resulting benzophenone can undergo a spontaneous dehydration to form norlichexanthone. However, the true precursor for the griseofulvin biosynthesis is not norlichexanthone, but the heptaketide benzophenone that is O-methylated at 3-OH by gsfB to produce griseophenone D which is further methylated at 9-OH by gsfC to yield griseophenone C. Griseophenone C is then substrate of halogenase gsfI which is responsible for the regio-specific chlorination at the C13 position to form griseophenone B. The cytochrome P450 gsfF catalyzes the coupling of orcinol and phloroglucinol rings in griseophenone B to form desmethyl-dehydrogriseofulvin A which is further methylated at 5-OH by gsfD to yield dehydrogriseofulvin. Finally, gsfE performs stereospecific reduction of enone 18 of dehydrogriseofulvin to afford the final product griseofulvin. The polypeptide is Non-reducing polyketide synthase gsfA (Penicillium aethiopicum).